Here is a 338-residue protein sequence, read N- to C-terminus: Phosphoribosylformylglycinamidine cyclo-ligase (338 aa).

The protein belongs to the AIR synthase family.

It is found in the cytoplasm. It catalyses the reaction 2-formamido-N(1)-(5-O-phospho-beta-D-ribosyl)acetamidine + ATP = 5-amino-1-(5-phospho-beta-D-ribosyl)imidazole + ADP + phosphate + H(+). It participates in purine metabolism; IMP biosynthesis via de novo pathway; 5-amino-1-(5-phospho-D-ribosyl)imidazole from N(2)-formyl-N(1)-(5-phospho-D-ribosyl)glycinamide: step 2/2. The chain is Phosphoribosylformylglycinamidine cyclo-ligase from Thermoplasma acidophilum (strain ATCC 25905 / DSM 1728 / JCM 9062 / NBRC 15155 / AMRC-C165).